Reading from the N-terminus, the 126-residue chain is Aspartate 1-decarboxylase 2 (126 aa).

The Schiff-base intermediate with substrate; via pyruvic acid role is filled by Ser25. At Ser25 the chain carries Pyruvic acid (Ser). Thr57 is a binding site for substrate. Tyr58 serves as the catalytic Proton donor. Residue 73 to 75 (GSA) coordinates substrate.

It belongs to the PanD family. Heterooctamer of four alpha and four beta subunits. Requires pyruvate as cofactor. Is synthesized initially as an inactive proenzyme, which is activated by self-cleavage at a specific serine bond to produce a beta-subunit with a hydroxyl group at its C-terminus and an alpha-subunit with a pyruvoyl group at its N-terminus.

Its subcellular location is the cytoplasm. The catalysed reaction is L-aspartate + H(+) = beta-alanine + CO2. It functions in the pathway cofactor biosynthesis; (R)-pantothenate biosynthesis; beta-alanine from L-aspartate: step 1/1. Functionally, catalyzes the pyruvoyl-dependent decarboxylation of aspartate to produce beta-alanine. In Polaromonas sp. (strain JS666 / ATCC BAA-500), this protein is Aspartate 1-decarboxylase 2.